The chain runs to 183 residues: MNKLANQHLIWIDLEMTGLDPNQDRIIEIATIVTDKDLNILAKGPVLAVHQPNTLLSKMNEWCIKTHTANGLIERVKQSKLTERAAELQTLDFLKQWVMKGSSPICGNSVAQDKRFLYQYMPDLADYFHYRHLDVSTLKELARRWKPEILQQFSKKNSHLALDDIRESIEELKFYREHFIKLA.

An Exonuclease domain is found at 9-172 (LIWIDLEMTG…DDIRESIEEL (164 aa)). Tyr-130 is a catalytic residue.

This sequence belongs to the oligoribonuclease family.

It localises to the cytoplasm. 3'-to-5' exoribonuclease specific for small oligoribonucleotides. In Haemophilus ducreyi (strain 35000HP / ATCC 700724), this protein is Oligoribonuclease.